The sequence spans 303 residues: Ferrochelatase (303 aa).

Positions 185 and 262 each coordinate Fe cation.

It belongs to the ferrochelatase family.

Its subcellular location is the cytoplasm. The enzyme catalyses heme b + 2 H(+) = protoporphyrin IX + Fe(2+). It participates in porphyrin-containing compound metabolism; protoheme biosynthesis; protoheme from protoporphyrin-IX: step 1/1. Functionally, catalyzes the ferrous insertion into protoporphyrin IX. In Campylobacter jejuni subsp. jejuni serotype O:2 (strain ATCC 700819 / NCTC 11168), this protein is Ferrochelatase.